Reading from the N-terminus, the 838-residue chain is Probable inorganic carbon transporter subunit DabA (838 aa).

Positions 353, 355, 537, and 552 each coordinate Zn(2+).

This sequence belongs to the inorganic carbon transporter (TC 9.A.2) DabA family. As to quaternary structure, forms a complex with DabB. Zn(2+) is required as a cofactor.

It localises to the cell membrane. Functionally, part of an energy-coupled inorganic carbon pump. This chain is Probable inorganic carbon transporter subunit DabA, found in Chloroflexus aurantiacus (strain ATCC 29366 / DSM 635 / J-10-fl).